The sequence spans 279 residues: Zinc finger AN1 and C2H2 domain-containing stress-associated protein 11 (279 aa).

2 AN1-type zinc fingers span residues 7–55 (PDLG…REDV) and 95–145 (ATKK…KLPF). Cys-13, Cys-18, Cys-28, Cys-31, Cys-36, His-39, His-45, Cys-47, Cys-101, Cys-106, Cys-118, Cys-121, Cys-126, His-129, His-135, and Cys-137 together coordinate Zn(2+). The segment at 152–178 (STTRKEAKTTRPNKAHPSTSSSSSSSR) is disordered. Positions 169–178 (STSSSSSSSR) are enriched in low complexity. 2 C2H2-type zinc fingers span residues 213–236 (EVCP…EKTH) and 250–273 (DVCP…ERDH).

Its function is as follows. May be involved in environmental stress response. The polypeptide is Zinc finger AN1 and C2H2 domain-containing stress-associated protein 11 (SAP11) (Arabidopsis thaliana (Mouse-ear cress)).